The chain runs to 171 residues: Lipoprotein signal peptidase (171 aa).

4 helical membrane passes run 15-35 (WLWL…IVMD), 47-67 (VLPF…SFLS), 72-92 (WQRW…AYWM), and 107-127 (ALII…GFVV). Residues Asp128 and Asp146 contribute to the active site. The chain crosses the membrane as a helical span at residues 141–161 (AFNLADSTICIGAAMIILDGF).

This sequence belongs to the peptidase A8 family.

The protein resides in the cell inner membrane. The enzyme catalyses Release of signal peptides from bacterial membrane prolipoproteins. Hydrolyzes -Xaa-Yaa-Zaa-|-(S,diacylglyceryl)Cys-, in which Xaa is hydrophobic (preferably Leu), and Yaa (Ala or Ser) and Zaa (Gly or Ala) have small, neutral side chains.. It functions in the pathway protein modification; lipoprotein biosynthesis (signal peptide cleavage). In terms of biological role, this protein specifically catalyzes the removal of signal peptides from prolipoproteins. This is Lipoprotein signal peptidase from Vibrio cholerae serotype O1 (strain ATCC 39315 / El Tor Inaba N16961).